We begin with the raw amino-acid sequence, 178 residues long: Nicotinamide-nucleotide adenylyltransferase (178 aa).

The protein belongs to the archaeal NMN adenylyltransferase family. As to quaternary structure, homohexamer.

The protein resides in the cytoplasm. It carries out the reaction beta-nicotinamide D-ribonucleotide + ATP + H(+) = diphosphate + NAD(+). Its pathway is cofactor biosynthesis; NAD(+) biosynthesis; NAD(+) from nicotinamide D-ribonucleotide: step 1/1. This is Nicotinamide-nucleotide adenylyltransferase from Methanothermobacter thermautotrophicus (strain ATCC 29096 / DSM 1053 / JCM 10044 / NBRC 100330 / Delta H) (Methanobacterium thermoautotrophicum).